Here is a 328-residue protein sequence, read N- to C-terminus: Fructokinase-2 (328 aa).

This sequence belongs to the carbohydrate kinase PfkB family.

It carries out the reaction D-fructose + ATP = D-fructose 6-phosphate + ADP + H(+). It participates in glycan biosynthesis; starch biosynthesis. In terms of biological role, may play an important role in maintaining the flux of carbon towards starch formation. This Solanum lycopersicum (Tomato) protein is Fructokinase-2 (FRK2).